The chain runs to 373 residues: tRNA (guanine(26)-N(2))-dimethyltransferase (373 aa).

Positions 2-365 (KIISEGETKL…AELSDLVVLI (364 aa)) constitute a Trm1 methyltransferase domain. S-adenosyl-L-methionine is bound by residues Arg35, Arg66, Asp86, Asp113, and Ala114.

The protein belongs to the class I-like SAM-binding methyltransferase superfamily. Trm1 family.

The catalysed reaction is guanosine(26) in tRNA + 2 S-adenosyl-L-methionine = N(2)-dimethylguanosine(26) in tRNA + 2 S-adenosyl-L-homocysteine + 2 H(+). Dimethylates a single guanine residue at position 26 of a number of tRNAs using S-adenosyl-L-methionine as donor of the methyl groups. This is tRNA (guanine(26)-N(2))-dimethyltransferase from Methanococcus maripaludis (strain C5 / ATCC BAA-1333).